The following is a 247-amino-acid chain: 5'-nucleotidase SurE (247 aa).

Residues Asp8, Asp9, Ser39, and Asn91 each contribute to the a divalent metal cation site.

This sequence belongs to the SurE nucleotidase family. A divalent metal cation serves as cofactor.

It localises to the cytoplasm. The catalysed reaction is a ribonucleoside 5'-phosphate + H2O = a ribonucleoside + phosphate. Functionally, nucleotidase that shows phosphatase activity on nucleoside 5'-monophosphates. This chain is 5'-nucleotidase SurE, found in Ruthia magnifica subsp. Calyptogena magnifica.